We begin with the raw amino-acid sequence, 148 residues long: Large ribosomal subunit protein bL9 (148 aa).

The disordered stretch occupies residues 46–65 (QLQQQNKHAEQEREQEIEDA). A compositionally biased stretch (basic and acidic residues) spans 52–65 (KHAEQEREQEIEDA).

This sequence belongs to the bacterial ribosomal protein bL9 family.

Its function is as follows. Binds to the 23S rRNA. The sequence is that of Large ribosomal subunit protein bL9 from Staphylococcus carnosus (strain TM300).